A 317-amino-acid polypeptide reads, in one-letter code: Carbonic anhydrase 5B, mitochondrial (317 aa).

The N-terminal 33 residues, Met-1 to Pro-33, are a transit peptide targeting the mitochondrion. In terms of domain architecture, Alpha-carbonic anhydrase spans Tyr-37–Phe-296. Zn(2+) is bound by residues His-130, His-132, and His-155. A substrate-binding site is contributed by Thr-235–Thr-236.

It belongs to the alpha-carbonic anhydrase family. It depends on Zn(2+) as a cofactor. Strongest expression in heart, pancreas, kidney, placenta, lung, and skeletal muscle. Not expressed in liver.

The protein resides in the mitochondrion. The enzyme catalyses hydrogencarbonate + H(+) = CO2 + H2O. With respect to regulation, inhibited by coumarins, sulfonamide derivatives such as acetazolamide (AZA), saccharin and Foscarnet (phosphonoformate trisodium salt). Its function is as follows. Mitochondrial carbonic anhydrase that catalyzes the reversible conversion of carbon dioxide to bicarbonate/HCO3. The sequence is that of Carbonic anhydrase 5B, mitochondrial (CA5B) from Homo sapiens (Human).